Here is a 247-residue protein sequence, read N- to C-terminus: Probable transcriptional regulatory protein LBF_0056 (247 aa).

It belongs to the TACO1 family.

It localises to the cytoplasm. This Leptospira biflexa serovar Patoc (strain Patoc 1 / Ames) protein is Probable transcriptional regulatory protein LBF_0056.